Consider the following 8892-residue polypeptide: Nonribosomal peptide synthetase 32 (8892 aa).

The Carrier 1 domain occupies 12 to 85; that stretch reads EPSKLVLGRV…QLAESIAQQN (74 aa). O-(pantetheine 4'-phosphoryl)serine is present on Ser46. Residues 88–112 are disordered; that stretch reads AGNGVNGHANGNGMNGNGLHNEATI. Low complexity predominate over residues 93 to 108; it reads NGHANGNGMNGNGLHN. The interval 567-956 is condensation 1; sequence PTSANVPRRV…EGVDLSVRDF (390 aa). The interval 989–1386 is adenylation 1; the sequence is KMAEQPEALA…GRIDSQIKIR (398 aa). One can recognise a Carrier 2 domain in the interval 1523–1599; it reads ISATAVEREL…ELAAEVQATQ (77 aa). An O-(pantetheine 4'-phosphoryl)serine modification is found at Ser1560. Residues 1609-2039 form an epimerization 1 region; that stretch reads GAIALSPIQQ…YGQTVKSLVN (431 aa). The tract at residues 2083–2518 is condensation 2; sequence EDILPCSPIQ…LLLPAEEAKL (436 aa). The adenylation 2 stretch occupies residues 2543–2934; sequence SQPEALAVSA…GRRDTQVKIR (392 aa). In terms of domain architecture, Carrier 3 spans 3061–3137; that stretch reads SSATPIEREL…ELAANSQTGR (77 aa). Ser3098 is modified (O-(pantetheine 4'-phosphoryl)serine). The epimerization 2 stretch occupies residues 3153 to 3590; sequence LSPIQQMFFD…GDTVKTLVEE (438 aa). The interval 3634-4061 is condensation 3; the sequence is EDILPCSAIQ…NVDRPLRELT (428 aa). Residues 4098–4488 form an adenylation 3 region; the sequence is TLPEALAISS…GRIDSQIKIR (391 aa). Residues 4627–4703 enclose the Carrier 4 domain; it reads APTTDLERKL…DLSRVVEEKC (77 aa). At Ser4664 the chain carries O-(pantetheine 4'-phosphoryl)serine. The interval 4760-5181 is condensation 4; the sequence is EDVYPCSPMQ…LLTDEDCDQL (422 aa). The interval 5205–5605 is adenylation 4; it reads TSYPTAPAIS…GRRDTQVKIR (401 aa). Residues 5745-5821 form the Carrier 5 domain; it reads MPTTPMEQKL…DLAEAMEEKG (77 aa). An O-(pantetheine 4'-phosphoryl)serine modification is found at Ser5782. Positions 5868–6285 are condensation 5; it reads EDVYPCSPLQ…LLSPGQMAQI (418 aa). Residues 6307-6700 form an adenylation 5 region; it reads QMTTRPAATA…GRIDTQIKIR (394 aa). The Carrier 6 domain maps to 6834-6911; sequence ELTTTIERQL…ELATQTQTTE (78 aa). Position 6872 is an O-(pantetheine 4'-phosphoryl)serine (Ser6872). An epimerization 3 region spans residues 6923–7360; sequence NFQLSPIQQM…SYSCAIESLV (438 aa). The interval 7403 to 7834 is condensation 6; the sequence is VQDILPCSPI…LLPAGDANQI (432 aa). Residues 7855–8253 are adenylation 6; it reads QQMAAHPTAQ…LDRIGTQVKI (399 aa). Positions 8380–8456 constitute a Carrier 7 domain; it reads APVGRNEEIL…AMAARVTADI (77 aa). Ser8417 is subject to O-(pantetheine 4'-phosphoryl)serine. The condensation 7 stretch occupies residues 8490–8878; that stretch reads HFAFDATGPC…EIIEDSGCNV (389 aa).

This sequence belongs to the NRP synthetase family.

It participates in secondary metabolite biosynthesis. Functionally, nonribosomal peptide synthetase; part of the gene cluster that mediates the biosynthesis of the lipopeptides W493 A and B. W493 A and B consist of six amino acid residues D-allo-thr, L-Ala, D-Ala, L-Gln, D-Tyr, and L-Val/L-Ile linked to a 3-hydroxy-4-methyltetradecanoic acid polyketide chain. The biosynthesis starts with formation of the linear polyketide chain by the highly reducing polyketide synthase PKS40. The gene cluster contains a putative acyl-CoA ligase (FPSE_09184) for formation of a CoA thioester polyketide. The thiol bond could be hydrolyzed by the putative thioesterase (FPSE_09186) and then accepted by the first T domain in module 1 of NRPS32. The second T domain is responsible for accepting a threonine, which is adenylated by the A domain and epimerized to the D-allo-threonine formed by the E domain. The five successive modules incorporate Ala, Ala, Gln, Tyr, and Val/Ile into the final product, which is released by cyclization. This chain is Nonribosomal peptide synthetase 32, found in Fusarium pseudograminearum (strain CS3096) (Wheat and barley crown-rot fungus).